We begin with the raw amino-acid sequence, 55 residues long: Protein CADMIUM TOLERANCE 1 (55 aa).

The helical transmembrane segment at 24–40 (GCLYACIFTALCCFCCY) threads the bilayer.

The protein belongs to the CYSTM1 family.

Its subcellular location is the cell membrane. The protein localises to the secreted. The protein resides in the cell wall. Its function is as follows. Confers resistance to heavy metal ions (e.g. cadmium (CdCl(2)) and copper (CuCl(2))) by chelating them at the plasma membrane of root cells, thus stopping their entry and reducing their accumulation. The sequence is that of Protein CADMIUM TOLERANCE 1 from Echinochloa crus-galli subsp. caudata (Cockspur).